A 95-amino-acid chain; its full sequence is Large ribosomal subunit protein eL37y (95 aa).

Positions 19, 22, 34, and 37 each coordinate Zn(2+). The segment at 19–37 (CVRCGRRSFHIQKSRCSAC) adopts a C4-type zinc-finger fold.

The protein belongs to the eukaryotic ribosomal protein eL37 family. Zn(2+) serves as cofactor.

Functionally, binds to the 23S rRNA. The sequence is that of Large ribosomal subunit protein eL37y (RPL37B) from Arabidopsis thaliana (Mouse-ear cress).